Consider the following 401-residue polypeptide: Nodal homolog 3-A (401 aa).

Residues 1 to 18 (MAFLNLFFCLVFISPLMA) form the signal peptide. A propeptide spanning residues 19–274 (MPPVLQGRKS…KVNGFRRLRR (256 aa)) is cleaved from the precursor. 4 N-linked (GlcNAc...) asparagine glycosylation sites follow: N168, N337, N341, and N344. 2 disulfides stabilise this stretch: C299-C365 and C328-C396.

This sequence belongs to the TGF-beta family. Monomer. The propeptide region interacts with bmp4 in a non-covalent manner. Expressed in the epithelial layer of the Spemann organizer during gastrulation.

The protein resides in the secreted. In terms of biological role, exhibits mesoderm-dorsalizing activity and neural-inducing activity, but lacks mesoderm-inducing activity. Regulates the expression of specific mesodermal and neural genes. Induces convergent extension movements at the embryonic midline by activating the fgf signaling pathway to induce t/bra expression in the organizer region. Acts with wnt11 to induce Spemann organizer cells and induce axis formation. The unprocessed protein antagonizes bmp-signaling. The polypeptide is Nodal homolog 3-A (nodal3-a) (Xenopus laevis (African clawed frog)).